Here is a 541-residue protein sequence, read N- to C-terminus: Propionate catabolism operon regulatory protein (541 aa).

In terms of domain architecture, Sigma-54 factor interaction spans 221 to 464; that stretch reads IRGQSPQMEQ…RNMMERLALF (244 aa). Residue 321 to 330 coordinates ATP; the sequence is AHGGTLFLDE. Residues 513-532 constitute a DNA-binding region (H-T-H motif); sequence KTAAARYLGISRTTLWRRLK.

Involved in the transcriptional regulation of the propionate catabolism operon. The chain is Propionate catabolism operon regulatory protein (prpR) from Salmonella typhimurium (strain LT2 / SGSC1412 / ATCC 700720).